The sequence spans 342 residues: Keratin-associated protein 29-1 (342 aa).

5 consecutive repeat copies span residues 5 to 9 (CCPEN), 91 to 95 (CCASD), 239 to 243 (CCVPP), 309 to 313 (CCVTG), and 324 to 328 (CCPPT). The interval 5 to 328 (CCPENPTAVP…SSGPGCCPPT (324 aa)) is 5 X 5 AA repeats of C-C-X(3).

This sequence belongs to the KRTAP type 10 family.

This is Keratin-associated protein 29-1 (Krtap29-1) from Mus musculus (Mouse).